A 552-amino-acid chain; its full sequence is ATP synthase subunit alpha (552 aa).

ATP is bound at residue 173–180 (GDRQTGKT). The interval 526-552 (ASPLDPSAVRKESIPVHRAPARTDDEG) is disordered. Basic and acidic residues predominate over residues 533-552 (AVRKESIPVHRAPARTDDEG).

The protein belongs to the ATPase alpha/beta chains family. As to quaternary structure, F-type ATPases have 2 components, CF(1) - the catalytic core - and CF(0) - the membrane proton channel. CF(1) has five subunits: alpha(3), beta(3), gamma(1), delta(1), epsilon(1). CF(0) has three main subunits: a(1), b(2) and c(9-12). The alpha and beta chains form an alternating ring which encloses part of the gamma chain. CF(1) is attached to CF(0) by a central stalk formed by the gamma and epsilon chains, while a peripheral stalk is formed by the delta and b chains.

Its subcellular location is the cell membrane. The catalysed reaction is ATP + H2O + 4 H(+)(in) = ADP + phosphate + 5 H(+)(out). Produces ATP from ADP in the presence of a proton gradient across the membrane. The alpha chain is a regulatory subunit. This is ATP synthase subunit alpha from Frankia alni (strain DSM 45986 / CECT 9034 / ACN14a).